The primary structure comprises 317 residues: Pantothenate kinase (317 aa).

99–106 (GSVSVGKS) provides a ligand contact to ATP.

It belongs to the prokaryotic pantothenate kinase family.

Its subcellular location is the cytoplasm. It carries out the reaction (R)-pantothenate + ATP = (R)-4'-phosphopantothenate + ADP + H(+). It functions in the pathway cofactor biosynthesis; coenzyme A biosynthesis; CoA from (R)-pantothenate: step 1/5. The chain is Pantothenate kinase from Histophilus somni (strain 129Pt) (Haemophilus somnus).